The primary structure comprises 308 residues: GTPase Era (308 aa).

Residues 7–181 (RCGWVALIGP…LRLIVGYMPE (175 aa)) enclose the Era-type G domain. The interval 15–22 (GPPNAGKS) is G1. 15 to 22 (GPPNAGKS) serves as a coordination point for GTP. Residues 41 to 45 (QTTRN) are G2. The G3 stretch occupies residues 62 to 65 (DTPG). GTP-binding positions include 62–66 (DTPGI) and 130–133 (NKID). Residues 130–133 (NKID) are G4. The G5 stretch occupies residues 160-162 (ASA). The region spanning 212–290 (LRQELPYSTA…HLELWVKVRE (79 aa)) is the KH type-2 domain.

The protein belongs to the TRAFAC class TrmE-Era-EngA-EngB-Septin-like GTPase superfamily. Era GTPase family. In terms of assembly, monomer.

Its subcellular location is the cytoplasm. The protein resides in the cell inner membrane. In terms of biological role, an essential GTPase that binds both GDP and GTP, with rapid nucleotide exchange. Plays a role in 16S rRNA processing and 30S ribosomal subunit biogenesis and possibly also in cell cycle regulation and energy metabolism. This chain is GTPase Era, found in Nitratidesulfovibrio vulgaris (strain DP4) (Desulfovibrio vulgaris).